A 304-amino-acid polypeptide reads, in one-letter code: MVDGWIILDKPLELGSTQGVAAVKRNLRQAGYGKCKVGHGGTLDPLATGVLPIAVGEATKLCGRMLDASKVYAFTVAFGTETDSLDLEGGIVATSDVRPPLADVHVTLGAFRDSIDQVPPAYSALMVEGRRAYDLARAGETVELPSRRVTIHALTLDSWTGSEGAVETATLTAHVSKGTYIRSLARDIARALGTVGHVTMLRRLKAGPFAIEQAISLDKLNALGQGAPLEHVLLPLEAGLVDIPALDLDPEQARAVRQGRVLTGLPFEDGLYWARLGTVPVALVELSDGNLKVSRGFNLQDVAE.

Residue Asp-44 is the Nucleophile of the active site.

It belongs to the pseudouridine synthase TruB family. Type 1 subfamily.

The enzyme catalyses uridine(55) in tRNA = pseudouridine(55) in tRNA. Responsible for synthesis of pseudouridine from uracil-55 in the psi GC loop of transfer RNAs. The polypeptide is tRNA pseudouridine synthase B (Novosphingobium aromaticivorans (strain ATCC 700278 / DSM 12444 / CCUG 56034 / CIP 105152 / NBRC 16084 / F199)).